Reading from the N-terminus, the 232-residue chain is Large ribosomal subunit protein uL1 (232 aa).

Belongs to the universal ribosomal protein uL1 family. As to quaternary structure, part of the 50S ribosomal subunit.

Binds directly to 23S rRNA. The L1 stalk is quite mobile in the ribosome, and is involved in E site tRNA release. Functionally, protein L1 is also a translational repressor protein, it controls the translation of the L11 operon by binding to its mRNA. The protein is Large ribosomal subunit protein uL1 of Methylorubrum extorquens (strain CM4 / NCIMB 13688) (Methylobacterium extorquens).